The sequence spans 147 residues: UPF0178 protein IL2341 (147 aa).

The protein belongs to the UPF0178 family.

In Idiomarina loihiensis (strain ATCC BAA-735 / DSM 15497 / L2-TR), this protein is UPF0178 protein IL2341.